The chain runs to 406 residues: Serine/threonine transporter SstT (406 aa).

Transmembrane regions (helical) follow at residues 15–35, 47–67, 81–101, 140–160, 191–211, 215–235, 289–309, 315–335, and 362–382; these read LVIQ…VSPS, FVGA…AASI, IIVM…VLSF, ALMS…GLAL, FGIF…ALAG, LLVV…PAMV, IPLG…TLTL, MGIE…AVSA, and IAMQ…SAET.

The protein belongs to the dicarboxylate/amino acid:cation symporter (DAACS) (TC 2.A.23) family.

It is found in the cell inner membrane. The enzyme catalyses L-serine(in) + Na(+)(in) = L-serine(out) + Na(+)(out). It carries out the reaction L-threonine(in) + Na(+)(in) = L-threonine(out) + Na(+)(out). Functionally, involved in the import of serine and threonine into the cell, with the concomitant import of sodium (symport system). The polypeptide is Serine/threonine transporter SstT (Vibrio vulnificus (strain YJ016)).